The following is a 344-amino-acid chain: Uroporphyrinogen decarboxylase (344 aa).

Residues 26-30, Asp75, Tyr150, Ser205, and His323 contribute to the substrate site; that span reads RQAGR.

It belongs to the uroporphyrinogen decarboxylase family. As to quaternary structure, homodimer.

It is found in the cytoplasm. It catalyses the reaction uroporphyrinogen III + 4 H(+) = coproporphyrinogen III + 4 CO2. It functions in the pathway porphyrin-containing compound metabolism; protoporphyrin-IX biosynthesis; coproporphyrinogen-III from 5-aminolevulinate: step 4/4. Functionally, catalyzes the decarboxylation of four acetate groups of uroporphyrinogen-III to yield coproporphyrinogen-III. The sequence is that of Uroporphyrinogen decarboxylase from Corynebacterium diphtheriae (strain ATCC 700971 / NCTC 13129 / Biotype gravis).